A 141-amino-acid polypeptide reads, in one-letter code: Large ribosomal subunit protein bL17 (141 aa).

It belongs to the bacterial ribosomal protein bL17 family. Part of the 50S ribosomal subunit. Contacts protein L32.

This Sinorhizobium medicae (strain WSM419) (Ensifer medicae) protein is Large ribosomal subunit protein bL17.